Reading from the N-terminus, the 536-residue chain is Glutamyl-tRNA(Gln) amidotransferase subunit B, mitochondrial (536 aa).

Residues 1-8 (MLRVHRLY) constitute a mitochondrion transit peptide.

It belongs to the GatB/GatE family. GatB subfamily. As to quaternary structure, subunit of the heterotrimeric GatFAB amidotransferase (AdT) complex, composed of A, B and F subunits.

The protein resides in the mitochondrion. It carries out the reaction L-glutamyl-tRNA(Gln) + L-glutamine + ATP + H2O = L-glutaminyl-tRNA(Gln) + L-glutamate + ADP + phosphate + H(+). Its function is as follows. Allows the formation of correctly charged Gln-tRNA(Gln) through the transamidation of misacylated Glu-tRNA(Gln) in the mitochondria. The reaction takes place in the presence of glutamine and ATP through an activated gamma-phospho-Glu-tRNA(Gln). This Eremothecium gossypii (strain ATCC 10895 / CBS 109.51 / FGSC 9923 / NRRL Y-1056) (Yeast) protein is Glutamyl-tRNA(Gln) amidotransferase subunit B, mitochondrial.